The sequence spans 467 residues: ATP-dependent protease ATPase subunit ClpY (467 aa).

ATP is bound by residues V20, 62–67 (GVGKTE), D279, E345, and R417.

The protein belongs to the ClpX chaperone family. HslU subfamily. A double ring-shaped homohexamer of ClpQ is capped on each side by a ring-shaped ClpY homohexamer. The assembly of the ClpQ/ClpY complex is dependent on binding of ATP.

Its subcellular location is the cytoplasm. With respect to regulation, ATPase activity is much induced upon complex formation with ClpQ. Functionally, ATPase subunit of a proteasome-like degradation complex; this subunit has chaperone activity. The sequence is that of ATP-dependent protease ATPase subunit ClpY (clpY) from Bacillus subtilis (strain 168).